The chain runs to 268 residues: uncharacterized protein (268 aa).

A coiled-coil region spans residues 132–159 (DELDEKIIEFDTKMNEILEELLEDVEVE).

This is an uncharacterized protein from Methanocaldococcus jannaschii (strain ATCC 43067 / DSM 2661 / JAL-1 / JCM 10045 / NBRC 100440) (Methanococcus jannaschii).